The chain runs to 331 residues: Light-harvesting complex I LH35 proteins (331 aa).

The protein resides in the plastid. Its subcellular location is the chloroplast. The polypeptide is Light-harvesting complex I LH35 proteins (Euglena gracilis).